The chain runs to 462 residues: Exodeoxyribonuclease 7 large subunit (462 aa).

The protein belongs to the XseA family. Heterooligomer composed of large and small subunits.

The protein localises to the cytoplasm. The catalysed reaction is Exonucleolytic cleavage in either 5'- to 3'- or 3'- to 5'-direction to yield nucleoside 5'-phosphates.. Its function is as follows. Bidirectionally degrades single-stranded DNA into large acid-insoluble oligonucleotides, which are then degraded further into small acid-soluble oligonucleotides. In Pectobacterium carotovorum subsp. carotovorum (strain PC1), this protein is Exodeoxyribonuclease 7 large subunit.